Here is a 417-residue protein sequence, read N- to C-terminus: Tyrosine--tRNA ligase (417 aa).

Tyr-39 lines the L-tyrosine pocket. The 'HIGH' region signature appears at 44–53 (PTASSLHAGS). Residues Tyr-176 and Gln-180 each contribute to the L-tyrosine site. Residues 236-240 (KMGKS) carry the 'KMSKS' region motif. Lys-239 provides a ligand contact to ATP. The S4 RNA-binding domain maps to 350–417 (TGLLILLVQA…KKKHVLIKPL (68 aa)).

This sequence belongs to the class-I aminoacyl-tRNA synthetase family. TyrS type 1 subfamily. In terms of assembly, homodimer.

Its subcellular location is the cytoplasm. It carries out the reaction tRNA(Tyr) + L-tyrosine + ATP = L-tyrosyl-tRNA(Tyr) + AMP + diphosphate + H(+). In terms of biological role, catalyzes the attachment of tyrosine to tRNA(Tyr) in a two-step reaction: tyrosine is first activated by ATP to form Tyr-AMP and then transferred to the acceptor end of tRNA(Tyr). The chain is Tyrosine--tRNA ligase from Bartonella henselae (strain ATCC 49882 / DSM 28221 / CCUG 30454 / Houston 1) (Rochalimaea henselae).